We begin with the raw amino-acid sequence, 326 residues long: Small ribosomal subunit protein RACK1x (326 aa).

WD repeat units follow at residues 13-53, 61-100, 103-142, 147-188, 191-230, 232-270, and 290-326; these read AHTD…KSYG, GHSH…TTRR, GHTK…KYTI, GHKE…LRNS, GHSG…KLYS, EAGS…VVED, and NQKK…IGRY.

This sequence belongs to the WD repeat G protein beta family. Ribosomal protein RACK1 subfamily. Homodimer and heterodimer with RACK1A or RACK1B. Interacts with GB1, MEKK1, MKK4, MKK5, MPK3 and MPK6, but not with GPA1 or MPK4. In terms of tissue distribution, widely expressed.

Functionally, minor component of the RACK1 regulatory proteins that play a role in multiple signal transduction pathways. Involved in multiple hormone responses and developmental processes. MAPK cascade scaffolding protein involved in the protease IV and ArgC signaling pathway but not the flg22 pathway. The protein is Small ribosomal subunit protein RACK1x of Arabidopsis thaliana (Mouse-ear cress).